We begin with the raw amino-acid sequence, 192 residues long: NADH-quinone oxidoreductase subunit B (192 aa).

[4Fe-4S] cluster-binding residues include Cys-71, Cys-72, Cys-136, and Cys-166.

The protein belongs to the complex I 20 kDa subunit family. As to quaternary structure, NDH-1 is composed of 14 different subunits. Subunits NuoB, C, D, E, F, and G constitute the peripheral sector of the complex. [4Fe-4S] cluster serves as cofactor.

It is found in the cell inner membrane. The catalysed reaction is a quinone + NADH + 5 H(+)(in) = a quinol + NAD(+) + 4 H(+)(out). NDH-1 shuttles electrons from NADH, via FMN and iron-sulfur (Fe-S) centers, to quinones in the respiratory chain. Couples the redox reaction to proton translocation (for every two electrons transferred, four hydrogen ions are translocated across the cytoplasmic membrane), and thus conserves the redox energy in a proton gradient. The protein is NADH-quinone oxidoreductase subunit B of Azorhizobium caulinodans (strain ATCC 43989 / DSM 5975 / JCM 20966 / LMG 6465 / NBRC 14845 / NCIMB 13405 / ORS 571).